A 564-amino-acid polypeptide reads, in one-letter code: Eukaryotic translation initiation factor 3 subunit L (564 aa).

N-acetylserine is present on Ser2. Position 21 is a phosphoserine (Ser21). Positions 331–537 (DAIRVFANIL…IHIADTKVAR (207 aa)) constitute a PCI domain. N6-acetyllysine occurs at positions 465 and 549.

In terms of assembly, component of the eukaryotic translation initiation factor 3 (eIF-3) complex, which is composed of 13 subunits: EIF3A, EIF3B, EIF3C, EIF3D, EIF3E, EIF3F, EIF3G, EIF3H, EIF3I, EIF3J, EIF3K, EIF3L and EIF3M. The eIF-3 complex appears to include 3 stable modules: module A is composed of EIF3A, EIF3B, EIF3G and EIF3I; module B is composed of EIF3F, EIF3H, and EIF3M; and module C is composed of EIF3C, EIF3D, EIF3E, EIF3K and EIF3L. EIF3C of module C binds EIF3B of module A and EIF3H of module B, thereby linking the three modules. EIF3J is a labile subunit that binds to the eIF-3 complex via EIF3B. The eIF-3 complex interacts with RPS6KB1 under conditions of nutrient depletion. Mitogenic stimulation leads to binding and activation of a complex composed of MTOR and RPTOR, leading to phosphorylation and release of RPS6KB1 and binding of EIF4B to eIF-3. Interacts with RRN3.

It is found in the cytoplasm. In terms of biological role, component of the eukaryotic translation initiation factor 3 (eIF-3) complex, which is required for several steps in the initiation of protein synthesis. The eIF-3 complex associates with the 40S ribosome and facilitates the recruitment of eIF-1, eIF-1A, eIF-2:GTP:methionyl-tRNAi and eIF-5 to form the 43S pre-initiation complex (43S PIC). The eIF-3 complex stimulates mRNA recruitment to the 43S PIC and scanning of the mRNA for AUG recognition. The eIF-3 complex is also required for disassembly and recycling of post-termination ribosomal complexes and subsequently prevents premature joining of the 40S and 60S ribosomal subunits prior to initiation. The eIF-3 complex specifically targets and initiates translation of a subset of mRNAs involved in cell proliferation, including cell cycling, differentiation and apoptosis, and uses different modes of RNA stem-loop binding to exert either translational activation or repression. Functionally, (Microbial infection) In case of FCV infection, plays a role in the ribosomal termination-reinitiation event leading to the translation of VP2. In Homo sapiens (Human), this protein is Eukaryotic translation initiation factor 3 subunit L.